A 452-amino-acid polypeptide reads, in one-letter code: Diphthine methyltransferase (452 aa).

7 WD repeats span residues 79–130 (PLVE…SHVL), 131–185 (EPLS…RPRL), 186–229 (QKVA…RVPG), 230–273 (KFLF…RNMK), 274–313 (QPLA…LNCQ), 314–403 (KAME…TEGM), and 404–448 (RKNG…HLWE). S353 is modified (phosphoserine). The tract at residues 371–402 (SELPTPCHECREDNDGEGHARPQSGMKPLTEG) is disordered. The segment covering 378 to 390 (HECREDNDGEGHA) has biased composition (basic and acidic residues).

The protein belongs to the DPH7 family. As to quaternary structure, interacts with INCA1.

The enzyme catalyses diphthine methyl ester-[translation elongation factor 2] + H2O = diphthine-[translation elongation factor 2] + methanol + H(+). The protein operates within protein modification; peptidyl-diphthamide biosynthesis. Functionally, catalyzes the demethylation of diphthine methyl ester to form diphthine, an intermediate diphthamide biosynthesis, a post-translational modification of histidine which occurs in translation elongation factor 2 (EEF2) which can be ADP-ribosylated by diphtheria toxin and by Pseudomonas exotoxin A (Eta). The sequence is that of Diphthine methyltransferase (DPH7) from Homo sapiens (Human).